The primary structure comprises 359 residues: MERTTNFNAGPAALPLEVLQKAQKEFIDFNESGMSVMELSHRSKEYEAVHQKAKSLLIELMGIPEDYDILFLQGGASLQFSMLPMNFLTPEKTAHFVMTGAWSEKALAETKLFGNTSITATSETDNYSYIPEVDLTDVKDGAYLHITSNNTIFGTQWQEFPNSPIPLVADMSSDILSRKIDVSKFDVIYGGAQKNLGPSGVTVVIMKKSWLQNENANVPKILKYSTHVKADSLYNTPPTFAIYMLSLVLEWLKENGGVEAVEQRNEQKAQVLYSCIDESNGFYKGHARKDSRSRMNVTFTLRDDELTKTFVQKAKDAKMIGLGGHRSVGGCRASIYNAVSLEDCEKLAAFMKKFQQENE.

Arginine 42 contributes to the L-glutamate binding site. Pyridoxal 5'-phosphate contacts are provided by residues 76–77, tryptophan 102, threonine 151, aspartate 170, and glutamine 193; that span reads AS. At lysine 194 the chain carries N6-(pyridoxal phosphate)lysine. Residue 235–236 participates in pyridoxal 5'-phosphate binding; it reads NT.

It belongs to the class-V pyridoxal-phosphate-dependent aminotransferase family. SerC subfamily. As to quaternary structure, homodimer. It depends on pyridoxal 5'-phosphate as a cofactor.

Its subcellular location is the cytoplasm. It carries out the reaction O-phospho-L-serine + 2-oxoglutarate = 3-phosphooxypyruvate + L-glutamate. The enzyme catalyses 4-(phosphooxy)-L-threonine + 2-oxoglutarate = (R)-3-hydroxy-2-oxo-4-phosphooxybutanoate + L-glutamate. It functions in the pathway amino-acid biosynthesis; L-serine biosynthesis; L-serine from 3-phospho-D-glycerate: step 2/3. The protein operates within cofactor biosynthesis; pyridoxine 5'-phosphate biosynthesis; pyridoxine 5'-phosphate from D-erythrose 4-phosphate: step 3/5. Its function is as follows. Catalyzes the reversible conversion of 3-phosphohydroxypyruvate to phosphoserine and of 3-hydroxy-2-oxo-4-phosphonooxybutanoate to phosphohydroxythreonine. The sequence is that of Phosphoserine aminotransferase (serC) from Bacillus subtilis (strain 168).